The primary structure comprises 217 residues: Large ribosomal subunit protein uL3 (217 aa).

This sequence belongs to the universal ribosomal protein uL3 family. As to quaternary structure, part of the 50S ribosomal subunit. Forms a cluster with proteins L14 and L19.

One of the primary rRNA binding proteins, it binds directly near the 3'-end of the 23S rRNA, where it nucleates assembly of the 50S subunit. This chain is Large ribosomal subunit protein uL3, found in Mycobacterium leprae (strain TN).